Here is an 86-residue protein sequence, read N- to C-terminus: Progonadoliberin IIB (86 aa).

Residues 1–24 form the signal peptide; sequence MVHICRLFVVMGMLMFLSVQFASS. A Pyrrolidone carboxylic acid modification is found at Gln25. Gly34 is subject to Glycine amide.

Belongs to the GnRH family. As to expression, olfactory bulbs, hypothalamus and telencephalon, midbrain and posterior brain areas.

The protein localises to the secreted. Stimulates the secretion of gonadotropins. The chain is Progonadoliberin IIB (gnrh2b) from Carassius auratus (Goldfish).